The sequence spans 185 residues: Large ribosomal subunit protein uL5 (185 aa).

It belongs to the universal ribosomal protein uL5 family. In terms of assembly, part of the 50S ribosomal subunit; part of the 5S rRNA/L5/L18/L25 subcomplex. Contacts the 5S rRNA and the P site tRNA. Forms a bridge to the 30S subunit in the 70S ribosome.

Functionally, this is one of the proteins that bind and probably mediate the attachment of the 5S RNA into the large ribosomal subunit, where it forms part of the central protuberance. In the 70S ribosome it contacts protein S13 of the 30S subunit (bridge B1b), connecting the 2 subunits; this bridge is implicated in subunit movement. Contacts the P site tRNA; the 5S rRNA and some of its associated proteins might help stabilize positioning of ribosome-bound tRNAs. The sequence is that of Large ribosomal subunit protein uL5 from Parabacteroides distasonis (strain ATCC 8503 / DSM 20701 / CIP 104284 / JCM 5825 / NCTC 11152).